Consider the following 325-residue polypeptide: Lipoyl synthase (325 aa).

[4Fe-4S] cluster is bound by residues Cys71, Cys76, Cys82, Cys97, Cys101, Cys104, and Ser311. Positions 83 to 300 (FSGGTATFMI…ERQALAMGFT (218 aa)) constitute a Radical SAM core domain.

It belongs to the radical SAM superfamily. Lipoyl synthase family. It depends on [4Fe-4S] cluster as a cofactor.

The protein localises to the cytoplasm. The enzyme catalyses [[Fe-S] cluster scaffold protein carrying a second [4Fe-4S](2+) cluster] + N(6)-octanoyl-L-lysyl-[protein] + 2 oxidized [2Fe-2S]-[ferredoxin] + 2 S-adenosyl-L-methionine + 4 H(+) = [[Fe-S] cluster scaffold protein] + N(6)-[(R)-dihydrolipoyl]-L-lysyl-[protein] + 4 Fe(3+) + 2 hydrogen sulfide + 2 5'-deoxyadenosine + 2 L-methionine + 2 reduced [2Fe-2S]-[ferredoxin]. It participates in protein modification; protein lipoylation via endogenous pathway; protein N(6)-(lipoyl)lysine from octanoyl-[acyl-carrier-protein]: step 2/2. Its function is as follows. Catalyzes the radical-mediated insertion of two sulfur atoms into the C-6 and C-8 positions of the octanoyl moiety bound to the lipoyl domains of lipoate-dependent enzymes, thereby converting the octanoylated domains into lipoylated derivatives. This Methylobacillus flagellatus (strain ATCC 51484 / DSM 6875 / VKM B-1610 / KT) protein is Lipoyl synthase.